A 109-amino-acid polypeptide reads, in one-letter code: Fluoride-specific ion channel FluC (109 aa).

The next 3 helical transmembrane spans lie at Phe-21 to Ile-41, Ile-52 to Tyr-72, and Leu-83 to Leu-103.

The protein belongs to the fluoride channel Fluc/FEX (TC 1.A.43) family.

It localises to the cell inner membrane. The catalysed reaction is fluoride(in) = fluoride(out). Its function is as follows. Fluoride-specific ion channel. Important for reducing fluoride concentration in the cell, thus reducing its toxicity. This chain is Fluoride-specific ion channel FluC, found in Prochlorococcus marinus (strain MIT 9515).